Consider the following 309-residue polypeptide: Zinc transporter ZIP2 (309 aa).

At 1 to 8 (MEQLLGIK) the chain is on the extracellular side. The helical transmembrane segment at 9–29 (LGCLFALLALTLGCGLTPICF) threads the bilayer. At 30-46 (KWFQIDAARGHHRLVLR) the chain is on the cytoplasmic side. A helical transmembrane segment spans residues 47-67 (LLGCISAGVFLGAGFMHMTAE). Residues 68–103 (ALEEIESQIQKFMVQNRSASERNSSGDADSAHMEYP) lie on the Extracellular side of the membrane. A helical membrane pass occupies residues 104–124 (YGELIISLGFFFVFFLESLAL). At 125-164 (QCCPGAAGGSTVQDEEWGGAHIFELHSHGHLPSPSKGPLR) the chain is on the cytoplasmic side. The helical transmembrane segment at 165–185 (ALVLLLSLSFHSVFEGLAVGL) threads the bilayer. The Zn(2+) site is built by histidine 175 and glutamate 179. At 186–189 (QPTV) the chain is on the extracellular side. Residues 190-210 (AATVQLCLAVLAHKGLVVFGV) traverse the membrane as a helical segment. Histidine 202 contacts Zn(2+). At 211–224 (GMRLVHLGTSSRWA) the chain is on the cytoplasmic side. Residues 225–245 (VFSILLLALMSPLGLAVGLAV) form a helical membrane-spanning segment. The Extracellular segment spans residues 246–258 (TGGDSEGGRGLAQ). A helical membrane pass occupies residues 259 to 279 (AVLEGVAAGTFLYVTFLEILP). Glutamate 276 contributes to the Zn(2+) binding site. At 280–288 (RELASPEAP) the chain is on the cytoplasmic side. Residues 289–309 (LAKWSCVAAGFAFMAFIALWA) form a helical membrane-spanning segment.

This sequence belongs to the ZIP transporter (TC 2.A.5) family. Expressed only in prostate and uterine epithelial cells.

The protein localises to the cell membrane. The catalysed reaction is Zn(2+)(in) = Zn(2+)(out). The enzyme catalyses Cd(2+)(in) = Cd(2+)(out). With respect to regulation, activity is increased at acidic pH (6.5). Inhibited in the presence of high extracellular K(+). Its function is as follows. Transporter for the divalent cation Zn(2+). Mediates the influx of Zn(2+) into cells from extracellular space. The Zn(2+) uniporter activity is independent of H(+)-driving force, but is modulated by extracellular pH and membrane potential. Also transports other divalent cations Zn(2+), Cd2(+), Cu2(+), Co2(+) in the order of decreasing affinity, respectively. In the skin, aids in the differentiation of keratinocytes in the epidermis. The chain is Zinc transporter ZIP2 from Homo sapiens (Human).